We begin with the raw amino-acid sequence, 199 residues long: NAD(P)H dehydrogenase (quinone) (199 aa).

A Flavodoxin-like domain is found at 4–190 (VLVLYYSAYG…AGARYQGKTI (187 aa)). FMN is bound by residues 10–15 (SAYGHI) and 78–80 (TRF). Tyrosine 12 contacts NAD(+). Position 98 (tryptophan 98) interacts with substrate. FMN is bound by residues 113–119 (STATQHG) and histidine 134.

The protein belongs to the WrbA family. Requires FMN as cofactor.

It carries out the reaction a quinone + NADH + H(+) = a quinol + NAD(+). It catalyses the reaction a quinone + NADPH + H(+) = a quinol + NADP(+). The chain is NAD(P)H dehydrogenase (quinone) from Rhodopseudomonas palustris (strain BisB5).